The chain runs to 443 residues: MSTSDSIVSSQTKQSSWRKSDTTWTLGLFGTAIGAGVLFFPIRAGFGGLIPILLMLVLAYPIAFYCHRALARLCLSGSNPSGNITETVEEHFGKTGGVVITFLYFFAICPLLWIYGVTITNTFMTFWENQLGFAPLNRGFVALFLLLLMAFVIWFGKDLMVKVMSYLVWPFIASLVLISLSLIPYWNSAVIDQVDLGSLSLTGHDGILITVWLGISIMVFSFNFSPIVSSFVVSKREEYEKDFGRDFTERKCSQIISRASMLMVAVVMFFAFSCLFTLSPANMAEAKAQNIPVLSYLANHFASMTGTKTTFAITLEYAASIIALVAIFKSFFGHYLGTLEGLNGLVLKFGYKGDKTKVSLGKLNTISMIFIMGSTWVVAYANPNILDLIEAMGAPIIASLLCLLPMYAIRKAPSLAKYRGRLDNVFVTVIGLLTILNIVYKLF.

11 helical membrane passes run 22 to 42 (TTWT…FFPI), 44 to 64 (AGFG…PIAF), 97 to 117 (GVVI…IYGV), 140 to 160 (FVAL…KDLM), 163 to 183 (VMSY…LSLI), 207 to 227 (ILIT…FSPI), 261 to 281 (MLMV…LSPA), 311 to 331 (FAIT…FKSF), 366 to 386 (ISMI…PNIL), 389 to 409 (IEAM…MYAI), and 423 to 443 (DNVF…YKLF).

The protein belongs to the amino acid/polyamine transporter 2 family. SdaC/TdcC subfamily.

It localises to the cell inner membrane. The catalysed reaction is L-threonine(in) + H(+)(in) = L-threonine(out) + H(+)(out). It catalyses the reaction L-serine(in) + H(+)(in) = L-serine(out) + H(+)(out). Involved in the import of threonine and serine into the cell, with the concomitant import of a proton (symport system). The polypeptide is Threonine/serine transporter TdcC (Shigella sonnei (strain Ss046)).